A 988-amino-acid chain; its full sequence is Voltage-gated delayed rectifier potassium channel KCNH5 (988 aa).

The Cytoplasmic portion of the chain corresponds to 1–217; the sequence is MPGGKRGLVA…LHYCAFKTTW (217 aa). One can recognise a PAS domain in the interval 14–86; sequence TFLENIVRRS…TIEKVRQTFD (73 aa). One can recognise a PAC domain in the interval 91–143; sequence NCFEVLLYKKNRTPVWFYMQIAPIRNEHEKVVLFLCTFKDITLFKQPIEDDST. Residues 218–238 traverse the membrane as a helical segment; that stretch reads DWVILILTFYTAIMVPYNVSF. At 239-243 the chain is on the extracellular side; it reads KTKQN. Residues 244–264 form a helical membrane-spanning segment; sequence NIAWLVLDSVVDVIFLVDIVL. The Cytoplasmic portion of the chain corresponds to 265–291; that stretch reads NFHTTFVGPGGEVISDPKLIRMNYLKT. The helical transmembrane segment at 292–312 threads the bilayer; the sequence is WFVIDLLSCLPYDIINAFENV. At 313-319 the chain is on the extracellular side; that stretch reads DEGISSL. A helical; Voltage-sensor membrane pass occupies residues 320–340; that stretch reads FSSLKVVRLLRLGRVARKLDH. The Cytoplasmic portion of the chain corresponds to 341–346; the sequence is YLEYGA. A helical transmembrane segment spans residues 347 to 367; that stretch reads AVLVLLVCVFGLVAHWLACIW. At 368–419 the chain is on the extracellular side; that stretch reads YSIGDYEVIDEVTNTIQIDSWLYQLALSIGTPYRYNTSAGIWEGGPSKDSLY. Residue asparagine 403 is glycosylated (N-linked (GlcNAc...) asparagine). The segment at residues 420 to 440 is an intramembrane region (pore-forming); sequence VSSLYFTMTSLTTIGFGNIAP. The Selectivity filter motif lies at 432-437; sequence TIGFGN. Residues 441–446 are Extracellular-facing; the sequence is TTDVEK. A helical membrane pass occupies residues 447 to 467; sequence MFSVAMMMVGSLLYATIFGNV. The Cytoplasmic segment spans residues 468–988; sequence TTIFQQMYAN…PESDKDEINF (521 aa). A nucleoside 3',5'-cyclic phosphate is bound at residue 550–667; the sequence is AFRLASDGCL…NSFSRNLTLT (118 aa). Residues 704–715 form a calmodulin-binding region; the sequence is HPVRKLFQKFKQ. The segment at 718–742 is disordered; sequence ELRNQGSAQSDPERSQLQVESRPLQ. Positions 721 to 742 are enriched in polar residues; it reads NQGSAQSDPERSQLQVESRPLQ. Residue lysine 785 forms a Glycyl lysine isopeptide (Lys-Gly) (interchain with G-Cter in ubiquitin) linkage. Disordered stretches follow at residues 839–897 and 946–965; these read LLSE…AKHP and SVPQ…PPQI. A compositionally biased stretch (basic and acidic residues) spans 871–885; it reads SDLRLDKAGEARSPL. Position 883 is a phosphoserine (serine 883). Residues 909 to 948 are CAD (involved in subunit assembly); sequence TLQEVKHELKEDIQLLSCRMTALEKQVAEILKLLSEKSVP.

This sequence belongs to the potassium channel family. H (Eag) (TC 1.A.1.20) subfamily. Kv10.2/KCNH5 sub-subfamily. In terms of assembly, homotetramer. The potassium channel is probably composed of a homo- or heterotetrameric complex of pore-forming alpha subunits that can associate with modulating beta subunits. Heteromultimer with KCNH1/EAG. Detected in adult testis and in embryonic and adult brain, but not in other tissues. Highly expressed in specific brain areas, such as neocortex, olfactory bulb, primary olfactory cortex and brain stem. In cortex, expression is concentrated in a narrow band toward the middle lamella (layer IV). Moderately expressed in spinal cord, dorsal thalamic nuclei, medial hypothalamus, colliculus, lateral lemniscus, pontine nuclei and Islands of Calleja.

It is found in the membrane. The enzyme catalyses K(+)(in) = K(+)(out). Inhibited by low nanomolar concentrations of cytosolic calcium. Functionally, pore-forming (alpha) subunit of a voltage-gated delayed rectifier potassium channel that mediates outward-rectifying potassium currents which, on depolarization, reaches a steady-state level and do not inactivate. The kinetic is characterized by a slow activation time course and a small voltage dependence of the activation time constants, therefore, starts to open at more negative voltages. The activation kinetics depend on the prepulse potential and external divalent cation concentration. The time course of activation is biphasic with a fast and a slowly activating current component. With negative prepulses, the current activation is delayed and slowed down several fold, whereas more positive prepulses speed up activation, therefore the activation rate depends on holding potential. The sequence is that of Voltage-gated delayed rectifier potassium channel KCNH5 from Rattus norvegicus (Rat).